The chain runs to 659 residues: Pentatricopeptide repeat-containing protein At3g48810 (659 aa).

PPR repeat units lie at residues 75 to 109 (TPLTFEVMIRKLAMDGQVDSVQYLLQQMKLQGFHC), 110 to 144 (SEDLFISVISVYRQVGLAERAVEMFYRIKEFGCDP), 145 to 179 (SVKIYNHVLDTLLGENRIQMIYMVYRDMKRDGFEP), 180 to 214 (NVFTYNVLLKALCKNNKVDGAKKLLVEMSNKGCCP), 215 to 243 (DAVSYTTVISSMCEVGLVKEGRELAERFE), 245 to 279 (VVSVYNALINGLCKEHDYKGAFELMREMVEKGISP), 280 to 314 (NVISYSTLINVLCNSGQIELAFSFLTQMLKRGCHP), 315 to 350 (NIYTLSSLVKGCFLRGTTFDALDLWNQMIRGFGLQP), 351 to 385 (NVVAYNTLVQGFCSHGNIVKAVSVFSHMEEIGCSP), 386 to 420 (NIRTYGSLINGFAKRGSLDGAVYIWNKMLTSGCCP), 421 to 455 (NVVVYTNMVEALCRHSKFKEAESLIEIMSKENCAP), 456 to 490 (SVPTFNAFIKGLCDAGRLDWAEKVFRQMEQQHRCP), 492 to 526 (NIVTYNELLDGLAKANRIEEAYGLTREIFMRGVEW), 527 to 561 (SSSTYNTLLHGSCNAGLPGIALQLVGKMMVDGKSP), 562 to 598 (DEITMNMIILAYCKQGKAERAAQMLDLVSCGRRKWRP), and 599 to 633 (DVISYTNVIWGLCRSNCREDGVILLERMISAGIVP).

Belongs to the PPR family. P subfamily.

This is Pentatricopeptide repeat-containing protein At3g48810 from Arabidopsis thaliana (Mouse-ear cress).